Reading from the N-terminus, the 187-residue chain is Elongation factor P (187 aa).

This sequence belongs to the elongation factor P family.

The protein localises to the cytoplasm. It participates in protein biosynthesis; polypeptide chain elongation. Its function is as follows. Involved in peptide bond synthesis. Stimulates efficient translation and peptide-bond synthesis on native or reconstituted 70S ribosomes in vitro. Probably functions indirectly by altering the affinity of the ribosome for aminoacyl-tRNA, thus increasing their reactivity as acceptors for peptidyl transferase. The chain is Elongation factor P from Bifidobacterium animalis subsp. lactis (strain AD011).